An 87-amino-acid polypeptide reads, in one-letter code: X protein (87 aa).

The nuclear export signal stretch occupies residues 5 to 16 (LRLTLLELVRRL). Positions 18 to 87 (GNATIESGRL…PANRKGAAVE (70 aa)) are disordered. Over residues 36–48 (DTTTGTTGVTKTT) the composition is skewed to low complexity.

Interacts with P and N proteins. These interactions presumably promote nuclear targeting of the X protein in infected cells. Interacts with host MAVS; this interaction inhibits MAVS-induced apoptosis. Post-translationally, phosphorylated.

The protein resides in the host nucleus. It is found in the host mitochondrion. Plays an essential role in the inhibition of host apoptosis. Mediates host mitochondria-mediated apoptosis through interaction with the mitochondrial antiviral signaling protein/MAVS and thereby promotes viral persistence in host central nervous system. Within the host nucleus, regulates viral RNA synthesis and polymerase complex assembly. The sequence is that of X protein (P/X) from Borna disease virus 1 (BoDV-1).